The following is a 225-amino-acid chain: Protein-L-isoaspartate O-methyltransferase (225 aa).

The active site involves Ser-75.

Belongs to the methyltransferase superfamily. L-isoaspartyl/D-aspartyl protein methyltransferase family.

Its subcellular location is the cytoplasm. The catalysed reaction is [protein]-L-isoaspartate + S-adenosyl-L-methionine = [protein]-L-isoaspartate alpha-methyl ester + S-adenosyl-L-homocysteine. Functionally, catalyzes the methyl esterification of L-isoaspartyl residues in peptides and proteins that result from spontaneous decomposition of normal L-aspartyl and L-asparaginyl residues. It plays a role in the repair and/or degradation of damaged proteins. This is Protein-L-isoaspartate O-methyltransferase from Stenotrophomonas maltophilia (strain R551-3).